The chain runs to 411 residues: LL-diaminopimelate aminotransferase (411 aa).

Residues Tyr15 and Gly42 each coordinate substrate. Residues Tyr72, 108 to 109 (SK), Tyr132, Asn187, Tyr218, and 246 to 248 (SFS) contribute to the pyridoxal 5'-phosphate site. Residues Lys109, Tyr132, and Asn187 each coordinate substrate. Position 249 is an N6-(pyridoxal phosphate)lysine (Lys249). 2 residues coordinate pyridoxal 5'-phosphate: Arg257 and Asn292. Residues Asn292 and Arg388 each coordinate substrate.

Belongs to the class-I pyridoxal-phosphate-dependent aminotransferase family. LL-diaminopimelate aminotransferase subfamily. Homodimer. Pyridoxal 5'-phosphate is required as a cofactor.

The catalysed reaction is (2S,6S)-2,6-diaminopimelate + 2-oxoglutarate = (S)-2,3,4,5-tetrahydrodipicolinate + L-glutamate + H2O + H(+). It functions in the pathway amino-acid biosynthesis; L-lysine biosynthesis via DAP pathway; LL-2,6-diaminopimelate from (S)-tetrahydrodipicolinate (aminotransferase route): step 1/1. Involved in the synthesis of meso-diaminopimelate (m-DAP or DL-DAP), required for both lysine and peptidoglycan biosynthesis. Catalyzes the direct conversion of tetrahydrodipicolinate to LL-diaminopimelate. The protein is LL-diaminopimelate aminotransferase of Gloeothece citriformis (strain PCC 7424) (Cyanothece sp. (strain PCC 7424)).